The following is a 184-amino-acid chain: ATP synthase subunit b, chloroplastic (184 aa).

Residues 29–49 (TNLINLGVVLGLLVYFGKGVL) traverse the membrane as a helical segment.

It belongs to the ATPase B chain family. F-type ATPases have 2 components, F(1) - the catalytic core - and F(0) - the membrane proton channel. F(1) has five subunits: alpha(3), beta(3), gamma(1), delta(1), epsilon(1). F(0) has four main subunits: a(1), b(1), b'(1) and c(10-14). The alpha and beta chains form an alternating ring which encloses part of the gamma chain. F(1) is attached to F(0) by a central stalk formed by the gamma and epsilon chains, while a peripheral stalk is formed by the delta, b and b' chains.

Its subcellular location is the plastid. The protein localises to the chloroplast thylakoid membrane. F(1)F(0) ATP synthase produces ATP from ADP in the presence of a proton or sodium gradient. F-type ATPases consist of two structural domains, F(1) containing the extramembraneous catalytic core and F(0) containing the membrane proton channel, linked together by a central stalk and a peripheral stalk. During catalysis, ATP synthesis in the catalytic domain of F(1) is coupled via a rotary mechanism of the central stalk subunits to proton translocation. Its function is as follows. Component of the F(0) channel, it forms part of the peripheral stalk, linking F(1) to F(0). The sequence is that of ATP synthase subunit b, chloroplastic from Anthoceros angustus (Hornwort).